The chain runs to 100 residues: NADH-quinone oxidoreductase subunit K 2 (100 aa).

The next 3 membrane-spanning stretches (helical) occupy residues 4-24 (LWWY…GVLI), 28-48 (ILVV…NFIA), and 60-80 (IFAI…LGIL).

This sequence belongs to the complex I subunit 4L family. In terms of assembly, NDH-1 is composed of 14 different subunits. Subunits NuoA, H, J, K, L, M, N constitute the membrane sector of the complex.

The protein resides in the cell inner membrane. The enzyme catalyses a quinone + NADH + 5 H(+)(in) = a quinol + NAD(+) + 4 H(+)(out). NDH-1 shuttles electrons from NADH, via FMN and iron-sulfur (Fe-S) centers, to quinones in the respiratory chain. The immediate electron acceptor for the enzyme in this species is believed to be ubiquinone. Couples the redox reaction to proton translocation (for every two electrons transferred, four hydrogen ions are translocated across the cytoplasmic membrane), and thus conserves the redox energy in a proton gradient. This Rhizobium etli (strain ATCC 51251 / DSM 11541 / JCM 21823 / NBRC 15573 / CFN 42) protein is NADH-quinone oxidoreductase subunit K 2.